The chain runs to 449 residues: Glutamyl-tRNA reductase (449 aa).

Substrate-binding positions include 58 to 61 (TCNR), Ser-121, 126 to 128 (ETQ), and Gln-132. The Nucleophile role is filled by Cys-59. 203 to 208 (GLGEMA) provides a ligand contact to NADP(+).

This sequence belongs to the glutamyl-tRNA reductase family. As to quaternary structure, homodimer.

It carries out the reaction (S)-4-amino-5-oxopentanoate + tRNA(Glu) + NADP(+) = L-glutamyl-tRNA(Glu) + NADPH + H(+). It functions in the pathway porphyrin-containing compound metabolism; protoporphyrin-IX biosynthesis; 5-aminolevulinate from L-glutamyl-tRNA(Glu): step 1/2. In terms of biological role, catalyzes the NADPH-dependent reduction of glutamyl-tRNA(Glu) to glutamate 1-semialdehyde (GSA). In Helicobacter pylori (strain J99 / ATCC 700824) (Campylobacter pylori J99), this protein is Glutamyl-tRNA reductase.